Consider the following 185-residue polypeptide: Kunitz-type serine protease inhibitor DrTI (185 aa).

2 disulfides stabilise this stretch: cysteine 44/cysteine 89 and cysteine 139/cysteine 147.

Belongs to the protease inhibitor I3 (leguminous Kunitz-type inhibitor) family.

Its subcellular location is the secreted. In terms of biological role, inhibits bovine trypsin and human plasma kallikrein. This is Kunitz-type serine protease inhibitor DrTI from Delonix regia (Royal poinciana).